A 451-amino-acid chain; its full sequence is Sex peptide receptor-related protein 2 (451 aa).

At 1-63 the chain is on the extracellular side; sequence MNYEVYCGNA…DNLEIVVYGQ (63 aa). Asparagine 15 carries N-linked (GlcNAc...) asparagine glycosylation. The helical transmembrane segment at 64–84 threads the bilayer; the sequence is IFPILVLFAVFANAAVALVLS. Residues 85-97 are Cytoplasmic-facing; it reads KKHMITPTNVVLK. The helical transmembrane segment at 98–118 threads the bilayer; it reads YMAIAELLVGLVPLPWTLFFF. Over 119–140 the chain is Extracellular; the sequence is SMGNIKETHRLELWWCYLQKYS. Cysteine 134 and cysteine 225 are disulfide-bonded. A helical transmembrane segment spans residues 141–161; sequence MDAFPPVFHMIAMWLTVLLAA. Residues 162-183 are Cytoplasmic-facing; it reads QRYVSISHPLHSRSACNVKNVR. The helical transmembrane segment at 184 to 204 threads the bilayer; the sequence is LATMIITVTSFLCGLPKSFDY. Residues 205-251 lie on the Extracellular side of the membrane; that stretch reads EYETVHGWIYSHGNWTYASSCVMMPTAILTNMGQTVYFNIYFWTRAL. The N-linked (GlcNAc...) asparagine glycan is linked to asparagine 218. The chain crosses the membrane as a helical span at residues 252–272; it reads GFIILPSFLLVLLNGLLIKGI. Residues 273–301 are Cytoplasmic-facing; that stretch reads RRAQRRKLRLLREKRSEEAARQRDSNSTS. Residues 302-322 traverse the membrane as a helical segment; that stretch reads LMLVAIVSIFLIVNLPQAIFM. Residues 323-334 are Extracellular-facing; sequence GLLCVCETFTIK. Residues 335–355 form a helical membrane-spanning segment; sequence IPILEGTFPAVFLIASNMIVI. The Cytoplasmic portion of the chain corresponds to 356-451; sequence ATYPINFGIY…TQFTTMDRSD (96 aa).

It belongs to the G-protein coupled receptor 1 family. In terms of tissue distribution, expressed in head neurons including the ASE sensory neurons and the ASI and AWB chemosensory neurons, the midbody neurons SDQ, and motor neurons in the tail.

Its subcellular location is the cell membrane. G-protein coupled receptor for the neuropeptide like protein nlp-38. Plays a role in several types of aversive gustatory associative learning including gustatory plasticity and salt avoidance learning. Its role in salt avoidance learning may be through activation of the transcription factor crh-1/CREB and de novo transcription and translation, which in turn promotes the formation of long-term memory. This is Sex peptide receptor-related protein 2 from Caenorhabditis elegans.